A 703-amino-acid polypeptide reads, in one-letter code: Methionine--tRNA ligase (703 aa).

A 'HIGH' region motif is present at residues 15–25; it reads PYANGPVHLGH. 4 residues coordinate Zn(2+): Cys-147, Cys-150, Cys-160, and Cys-163. A 'KMSKS' region motif is present at residues 345-349; the sequence is KFSKS. Lys-348 contributes to the ATP binding site. The tRNA-binding domain occupies 602–703; that stretch reads DFQKIDLRVA…GEGINGNSVS (102 aa).

The protein belongs to the class-I aminoacyl-tRNA synthetase family. MetG type 1 subfamily. In terms of assembly, homodimer. Zn(2+) serves as cofactor.

It localises to the cytoplasm. It catalyses the reaction tRNA(Met) + L-methionine + ATP = L-methionyl-tRNA(Met) + AMP + diphosphate. In terms of biological role, is required not only for elongation of protein synthesis but also for the initiation of all mRNA translation through initiator tRNA(fMet) aminoacylation. The sequence is that of Methionine--tRNA ligase from Chlorobaculum tepidum (strain ATCC 49652 / DSM 12025 / NBRC 103806 / TLS) (Chlorobium tepidum).